The chain runs to 40 residues: Photosystem II reaction center protein J (40 aa).

A helical membrane pass occupies residues I8–F28.

The protein belongs to the PsbJ family. In terms of assembly, PSII is composed of 1 copy each of membrane proteins PsbA, PsbB, PsbC, PsbD, PsbE, PsbF, PsbH, PsbI, PsbJ, PsbK, PsbL, PsbM, PsbT, PsbX, PsbY, PsbZ, Psb30/Ycf12, at least 3 peripheral proteins of the oxygen-evolving complex and a large number of cofactors. It forms dimeric complexes.

It localises to the plastid. Its subcellular location is the chloroplast thylakoid membrane. In terms of biological role, one of the components of the core complex of photosystem II (PSII). PSII is a light-driven water:plastoquinone oxidoreductase that uses light energy to abstract electrons from H(2)O, generating O(2) and a proton gradient subsequently used for ATP formation. It consists of a core antenna complex that captures photons, and an electron transfer chain that converts photonic excitation into a charge separation. The chain is Photosystem II reaction center protein J from Ipomoea purpurea (Common morning glory).